We begin with the raw amino-acid sequence, 349 residues long: Phospho-N-acetylmuramoyl-pentapeptide-transferase (349 aa).

Helical transmembrane passes span 13–33 (LFFSLALTGMTTLVLTVSLGV), 69–89 (GGGVLLFISLIASLLVWLPWG), 91–111 (FSTWFFIILLTCYAGLGWYDD), 129–149 (FMVQIAIAAFTLIALPYIYGS), 165–185 (LSLPFWLGKVFCLGLALVAII), 197–217 (LDGLAAGTMSFAALGFIFVAL), 228–248 (VAYVLAALVGACIGFLWYNGF), 252–272 (LFMGDTGSLLLGGLLGSCAVM), 278–298 (ILVVIGGVFVAEAGSVILQVL), and 327–347 (IVMRFWIFSFVCAGLGIAAVL).

Belongs to the glycosyltransferase 4 family. MraY subfamily. Mg(2+) is required as a cofactor.

It localises to the cell inner membrane. It carries out the reaction UDP-N-acetyl-alpha-D-muramoyl-L-alanyl-gamma-D-glutamyl-meso-2,6-diaminopimeloyl-D-alanyl-D-alanine + di-trans,octa-cis-undecaprenyl phosphate = di-trans,octa-cis-undecaprenyl diphospho-N-acetyl-alpha-D-muramoyl-L-alanyl-D-glutamyl-meso-2,6-diaminopimeloyl-D-alanyl-D-alanine + UMP. It participates in cell wall biogenesis; peptidoglycan biosynthesis. In terms of biological role, catalyzes the initial step of the lipid cycle reactions in the biosynthesis of the cell wall peptidoglycan: transfers peptidoglycan precursor phospho-MurNAc-pentapeptide from UDP-MurNAc-pentapeptide onto the lipid carrier undecaprenyl phosphate, yielding undecaprenyl-pyrophosphoryl-MurNAc-pentapeptide, known as lipid I. The chain is Phospho-N-acetylmuramoyl-pentapeptide-transferase from Chlamydia pneumoniae (Chlamydophila pneumoniae).